Consider the following 300-residue polypeptide: Ribosomal protein bS6--L-glutamate ligase (300 aa).

Residues 104–287 form the ATP-grasp domain; sequence MQLLARQGID…IASKMIRWIE (184 aa). Residues Lys-141, 178–179, Asp-187, and 211–213 each bind ATP; these read EY and RSN. 3 residues coordinate Mg(2+): Asp-248, Glu-260, and Asn-262. Residues Asp-248, Glu-260, and Asn-262 each coordinate Mn(2+).

This sequence belongs to the RimK family. Mg(2+) is required as a cofactor. Requires Mn(2+) as cofactor.

Functionally, an L-glutamate ligase that catalyzes the ATP-dependent post-translational addition of glutamate residues to the C-terminus of ribosomal protein bS6 (RpsF). Is also able to catalyze the synthesis of poly-alpha-glutamate in vitro, via ATP hydrolysis from unprotected glutamate as substrate. The number of glutamate residues added to either RpsF or to poly-alpha-glutamate changes with pH. The chain is Ribosomal protein bS6--L-glutamate ligase from Escherichia coli O81 (strain ED1a).